The sequence spans 86 residues: Exodeoxyribonuclease 7 small subunit (86 aa).

This sequence belongs to the XseB family. Heterooligomer composed of large and small subunits.

Its subcellular location is the cytoplasm. It catalyses the reaction Exonucleolytic cleavage in either 5'- to 3'- or 3'- to 5'-direction to yield nucleoside 5'-phosphates.. Functionally, bidirectionally degrades single-stranded DNA into large acid-insoluble oligonucleotides, which are then degraded further into small acid-soluble oligonucleotides. The chain is Exodeoxyribonuclease 7 small subunit from Xanthomonas euvesicatoria pv. vesicatoria (strain 85-10) (Xanthomonas campestris pv. vesicatoria).